Consider the following 155-residue polypeptide: Interleukin-2 (155 aa).

An N-terminal signal peptide occupies residues methionine 1 to glycine 20. An O-linked (GalNAc...) threonine glycan is attached at threonine 23. A disulfide bond links cysteine 79 and cysteine 127.

Belongs to the IL-2 family.

The protein localises to the secreted. Its function is as follows. Cytokine produced by activated CD4-positive helper T-cells and to a lesser extend activated CD8-positive T-cells and natural killer (NK) cells that plays pivotal roles in the immune response and tolerance. Binds to a receptor complex composed of either the high-affinity trimeric IL-2R (IL2RA/CD25, IL2RB/CD122 and IL2RG/CD132) or the low-affinity dimeric IL-2R (IL2RB and IL2RG). Interaction with the receptor leads to oligomerization and conformation changes in the IL-2R subunits resulting in downstream signaling starting with phosphorylation of JAK1 and JAK3. In turn, JAK1 and JAK3 phosphorylate the receptor to form a docking site leading to the phosphorylation of several substrates including STAT5. This process leads to activation of several pathways including STAT, phosphoinositide-3-kinase/PI3K and mitogen-activated protein kinase/MAPK pathways. Functions as a T-cell growth factor and can increase NK-cell cytolytic activity as well. Promotes strong proliferation of activated B-cells and subsequently immunoglobulin production. Plays a pivotal role in regulating the adaptive immune system by controlling the survival and proliferation of regulatory T-cells, which are required for the maintenance of immune tolerance. Moreover, participates in the differentiation and homeostasis of effector T-cell subsets, including Th1, Th2, Th17 as well as memory CD8-positive T-cells. The polypeptide is Interleukin-2 (IL2) (Capra hircus (Goat)).